The sequence spans 128 residues: Sulfurtransferase TusD (128 aa).

Residue Cys78 is the Cysteine persulfide intermediate of the active site.

It belongs to the DsrE/TusD family. In terms of assembly, heterohexamer, formed by a dimer of trimers. The hexameric TusBCD complex contains 2 copies each of TusB, TusC and TusD. The TusBCD complex interacts with TusE.

The protein resides in the cytoplasm. Part of a sulfur-relay system required for 2-thiolation of 5-methylaminomethyl-2-thiouridine (mnm(5)s(2)U) at tRNA wobble positions. Accepts sulfur from TusA and transfers it in turn to TusE. The sequence is that of Sulfurtransferase TusD from Escherichia coli O127:H6 (strain E2348/69 / EPEC).